Reading from the N-terminus, the 352-residue chain is C-X-C chemokine receptor type 4 (352 aa).

Positions 1–21 (MEGISIYTSDNYTEEMGSGDY) are important for chemokine binding and signaling. Over 1-38 (MEGISIYTSDNYTEEMGSGDYDSIKEPCFREENAHFNR) the chain is Extracellular. The residue at position 7 (Tyr-7) is a Sulfotyrosine. N-linked (GlcNAc...) asparagine glycosylation occurs at Asn-11. Tyr-12 bears the Sulfotyrosine mark. The O-linked (Xyl...) (chondroitin sulfate) serine glycan is linked to Ser-18. At Tyr-21 the chain carries Sulfotyrosine. 2 disulfide bridges follow: Cys-28-Cys-274 and Cys-109-Cys-186. A helical transmembrane segment spans residues 39 to 63 (IFLPTIYSIIFLTGIVGNGLVILVM). At 64–77 (GYQKKLRSMTDKYR) the chain is on the cytoplasmic side. Residues 78-99 (LHLSVADLLFVITLPFWAVDAV) form a helical membrane-spanning segment. The chemokine binding stretch occupies residues 94-97 (WAVD). Over 100–110 (ANWYFGNFLCK) the chain is Extracellular. Residues 111 to 130 (AVHVIYTVNLYSSVLILAFI) traverse the membrane as a helical segment. A chemokine binding region spans residues 113-117 (HVIYT). The Cytoplasmic portion of the chain corresponds to 131–154 (SLDRYLAIVHATNSQRPRKLLAEK). Residues 133-135 (DRY) carry the Important for signaling motif. The involved in dimerization; when bound to chemokine stretch occupies residues 135–147 (YLAIVHATNSQRP). Residues 155–174 (VVYVGVWIPALLLTIPDFIF) traverse the membrane as a helical segment. Residues 175–195 (ASVSEADDRYICDRFYPNDLW) lie on the Extracellular side of the membrane. The chemokine binding, important for signaling stretch occupies residues 186 to 190 (CDRFY). Positions 191-210 (PNDLWVVVFQFQHIMVGLIL) are involved in dimerization. The helical transmembrane segment at 196–216 (VVVFQFQHIMVGLILPGIVIL) threads the bilayer. Over 217 to 241 (SCYCIIISKLSHSKGHQKRKALKTT) the chain is Cytoplasmic. The chain crosses the membrane as a helical span at residues 242–261 (VILILAFFACWLPYYIGISI). At 262-282 (DSFILLEIIKQGCEFENTVHK) the chain is on the extracellular side. The interval 266–268 (LLE) is involved in dimerization. A helical transmembrane segment spans residues 283 to 302 (WISITEALAFFHCCLNPILY). The Cytoplasmic portion of the chain corresponds to 303–352 (AFLGAKFKTSAQHALTSVSRGSSLKILSKGKRGGHSSVSTESESSSFHSS). Phosphoserine occurs at positions 319 and 321. 2 positions are modified to phosphoserine; by PKC and GRK6: Ser-324 and Ser-325. Positions 329–352 (LSKGKRGGHSSVSTESESSSFHSS) are disordered. A Phosphoserine; by GRK6 modification is found at Ser-330. Residue Lys-331 forms a Glycyl lysine isopeptide (Lys-Gly) (interchain with G-Cter in ubiquitin) linkage. Positions 337–352 (HSSVSTESESSSFHSS) are enriched in low complexity. Ser-339 is subject to Phosphoserine; by GRK6. Phosphoserine is present on residues Ser-348 and Ser-351.

This sequence belongs to the G-protein coupled receptor 1 family. In terms of assembly, monomer. Can form homodimers. Interacts with CD164. Interacts with ARRB2; the interaction is dependent on the C-terminal phosphorylation of CXCR4 and allows activation of MAPK1 and MAPK3. Interacts with ARR3; the interaction is dependent on the C-terminal phosphorylation of CXCR4 and modulates calcium mobilization. Interacts with RNF113A; the interaction, enhanced by CXCL12, promotes CXCR4 ubiquitination and subsequent degradation. Interacts (via the cytoplasmic C-terminal) with ITCH (via the WW domains I and II); the interaction, enhanced by CXCL12, promotes CXCR4 ubiquitination and leads to its degradation. Interacts with extracellular ubiquitin. Interacts with DBN1; this interaction is enhanced by antigenic stimulation. Following LPS binding, may form a complex with GDF5, HSP90AA1 and HSPA8. Post-translationally, phosphorylated on agonist stimulation. Rapidly phosphorylated on serine and threonine residues in the C-terminal. Phosphorylation at Ser-324 and Ser-325 leads to recruitment of ITCH, ubiquitination and protein degradation. In terms of processing, ubiquitinated after ligand binding, leading to its degradation. Ubiquitinated by ITCH at the cell membrane on agonist stimulation. The ubiquitin-dependent mechanism, endosomal sorting complex required for transport (ESCRT), then targets CXCR4 for lysosomal degradation. This process is dependent also on prior Ser-/Thr-phosphorylation in the C-terminal of CXCR4. Also binding of ARRB1 to STAM negatively regulates CXCR4 sorting to lysosomes though modulating ubiquitination of SFR5S. Sulfation is required for efficient binding of CXCL12/SDF-1alpha and promotes its dimerization. Post-translationally, O- and N-glycosylated. N-glycosylation can mask coreceptor function. The O-glycosylation chondroitin sulfate attachment does not affect interaction with CXCL12/SDF-1alpha nor its coreceptor activity.

The protein resides in the cell membrane. It localises to the cell junction. It is found in the early endosome. The protein localises to the late endosome. Its subcellular location is the lysosome. Receptor for the C-X-C chemokine CXCL12/SDF-1 that transduces a signal by increasing intracellular calcium ion levels and enhancing MAPK1/MAPK3 activation. Involved in the AKT signaling cascade. Plays a role in regulation of cell migration, e.g. during wound healing. Acts as a receptor for extracellular ubiquitin; leading to enhanced intracellular calcium ions and reduced cellular cAMP levels. Binds bacterial lipopolysaccharide (LPS) et mediates LPS-induced inflammatory response, including TNF secretion by monocytes. Involved in hematopoiesis and in cardiac ventricular septum formation. Also plays an essential role in vascularization of the gastrointestinal tract, probably by regulating vascular branching and/or remodeling processes in endothelial cells. Involved in cerebellar development. In the CNS, could mediate hippocampal-neuron survival. The chain is C-X-C chemokine receptor type 4 (CXCR4) from Papio anubis (Olive baboon).